The chain runs to 537 residues: Phosphoenolpyruvate carboxykinase (ATP) (537 aa).

The substrate site is built by Arg-61, Tyr-195, and Lys-201. Residues Lys-201, His-220, and Gly-236 to Thr-244 each bind ATP. Lys-201 and His-220 together coordinate Mn(2+). Asp-257 is a Mn(2+) binding site. An ATP-binding site is contributed by Glu-285. The segment covering Pro-311–Asn-321 has biased composition (basic and acidic residues). The disordered stretch occupies residues Pro-311–Gln-342. Residue Arg-323 participates in substrate binding. ATP is bound by residues Arg-323 and Thr-448.

Belongs to the phosphoenolpyruvate carboxykinase (ATP) family. The cofactor is Mn(2+).

It is found in the cytoplasm. The catalysed reaction is oxaloacetate + ATP = phosphoenolpyruvate + ADP + CO2. The protein operates within carbohydrate biosynthesis; gluconeogenesis. Functionally, involved in the gluconeogenesis. Catalyzes the conversion of oxaloacetate (OAA) to phosphoenolpyruvate (PEP) through direct phosphoryl transfer between the nucleoside triphosphate and OAA. This chain is Phosphoenolpyruvate carboxykinase (ATP), found in Rhodopseudomonas palustris (strain BisB5).